The chain runs to 160 residues: SsrA-binding protein (160 aa).

Positions 137–153 (DKRDDIKTREWKQDKAR) are enriched in basic and acidic residues. The disordered stretch occupies residues 137-160 (DKRDDIKTREWKQDKARIMKNANR).

Belongs to the SmpB family.

The protein localises to the cytoplasm. Functionally, required for rescue of stalled ribosomes mediated by trans-translation. Binds to transfer-messenger RNA (tmRNA), required for stable association of tmRNA with ribosomes. tmRNA and SmpB together mimic tRNA shape, replacing the anticodon stem-loop with SmpB. tmRNA is encoded by the ssrA gene; the 2 termini fold to resemble tRNA(Ala) and it encodes a 'tag peptide', a short internal open reading frame. During trans-translation Ala-aminoacylated tmRNA acts like a tRNA, entering the A-site of stalled ribosomes, displacing the stalled mRNA. The ribosome then switches to translate the ORF on the tmRNA; the nascent peptide is terminated with the 'tag peptide' encoded by the tmRNA and targeted for degradation. The ribosome is freed to recommence translation, which seems to be the essential function of trans-translation. The sequence is that of SsrA-binding protein from Edwardsiella ictaluri (strain 93-146).